Here is a 177-residue protein sequence, read N- to C-terminus: Alkyl hydroperoxide reductase AhpD (177 aa).

The active-site Proton donor is cysteine 131. A disulfide bridge links cysteine 131 with cysteine 134. Cysteine 134 serves as the catalytic Cysteine sulfenic acid (-SOH) intermediate.

The protein belongs to the AhpD family. Homotrimer.

The catalysed reaction is N(6)-[(R)-dihydrolipoyl]-L-lysyl-[lipoyl-carrier protein] + a hydroperoxide = N(6)-[(R)-lipoyl]-L-lysyl-[lipoyl-carrier protein] + an alcohol + H2O. Antioxidant protein with alkyl hydroperoxidase activity. Required for the reduction of the AhpC active site cysteine residues and for the regeneration of the AhpC enzyme activity. This chain is Alkyl hydroperoxide reductase AhpD, found in Streptomyces avermitilis (strain ATCC 31267 / DSM 46492 / JCM 5070 / NBRC 14893 / NCIMB 12804 / NRRL 8165 / MA-4680).